The primary structure comprises 301 residues: UDP-N-acetylenolpyruvoylglucosamine reductase (301 aa).

The FAD-binding PCMH-type domain occupies 24–190 (RVGGLAQFYD…VSAQLQLQPG (167 aa)). Arg169 is an active-site residue. Ser220 acts as the Proton donor in catalysis. The active site involves Glu290.

The protein belongs to the MurB family. The cofactor is FAD.

The protein resides in the cytoplasm. It carries out the reaction UDP-N-acetyl-alpha-D-muramate + NADP(+) = UDP-N-acetyl-3-O-(1-carboxyvinyl)-alpha-D-glucosamine + NADPH + H(+). It participates in cell wall biogenesis; peptidoglycan biosynthesis. Its function is as follows. Cell wall formation. This Synechococcus sp. (strain ATCC 27144 / PCC 6301 / SAUG 1402/1) (Anacystis nidulans) protein is UDP-N-acetylenolpyruvoylglucosamine reductase.